Consider the following 212-residue polypeptide: Pyridoxine/pyridoxamine 5'-phosphate oxidase (212 aa).

Residues 9–12 (RKSY) and Lys-67 contribute to the substrate site. FMN-binding positions include 62–67 (RIVLIK), 77–78 (FT), Arg-83, and Lys-84. Positions 124, 128, and 132 each coordinate substrate. Residues 141–142 (QS) and Trp-185 contribute to the FMN site. 191–193 (RLH) is a substrate binding site. Arg-195 provides a ligand contact to FMN.

Belongs to the pyridoxamine 5'-phosphate oxidase family. Homodimer. FMN serves as cofactor.

The enzyme catalyses pyridoxamine 5'-phosphate + O2 + H2O = pyridoxal 5'-phosphate + H2O2 + NH4(+). The catalysed reaction is pyridoxine 5'-phosphate + O2 = pyridoxal 5'-phosphate + H2O2. It functions in the pathway cofactor metabolism; pyridoxal 5'-phosphate salvage; pyridoxal 5'-phosphate from pyridoxamine 5'-phosphate: step 1/1. Its pathway is cofactor metabolism; pyridoxal 5'-phosphate salvage; pyridoxal 5'-phosphate from pyridoxine 5'-phosphate: step 1/1. Catalyzes the oxidation of either pyridoxine 5'-phosphate (PNP) or pyridoxamine 5'-phosphate (PMP) into pyridoxal 5'-phosphate (PLP). This is Pyridoxine/pyridoxamine 5'-phosphate oxidase from Verminephrobacter eiseniae (strain EF01-2).